The sequence spans 435 residues: Mitogen-activated protein kinase HOG1 (435 aa).

N-acetylthreonine is present on Thr2. One can recognise a Protein kinase domain in the interval Tyr23–Ser302. ATP contacts are provided by residues Val29 to Val37 and Lys52. Asp144 acts as the Proton acceptor in catalysis. The arsenite site is built by Cys156 and Cys161. Thr174 is subject to Phosphothreonine; by PBS2. Residues Thr174–Tyr176 carry the TXY motif. Tyr176 is subject to Phosphotyrosine; by PBS2. Cys205 is a binding site for arsenite.

This sequence belongs to the protein kinase superfamily. Ser/Thr protein kinase family. MAP kinase subfamily. HOG1 sub-subfamily. As to quaternary structure, interacts with CDC37, HOT1, KIN28, PTP2, PTP3, RBP1, RCK2, RPD3, SIC1, SMP1 and SIN4. The cofactor is Mg(2+). In terms of processing, activated by PBS2-mediated concomitant phosphorylation at Thr-174 and Tyr-176. Dually phosphorylated on Thr-174 and Tyr-176, which activates the enzyme.

It is found in the cytoplasm. It localises to the nucleus. The enzyme catalyses L-seryl-[protein] + ATP = O-phospho-L-seryl-[protein] + ADP + H(+). It catalyses the reaction L-threonyl-[protein] + ATP = O-phospho-L-threonyl-[protein] + ADP + H(+). Its activity is regulated as follows. Activated by tyrosine and threonine phosphorylation. Inactivated by dephosphorylation via recruitment of PTC1 to the PBS2-HOG1 complex after adaptation to osmotic stress. PTP2 and PTP3 inactivate HOG1 by dephosphorylating Tyr-176, while the PP2Cs PTC1 and PTC2 or PTC3 dephosphorylate Thr-174 in the activation loop. Proline-directed serine/threonine-protein kinase involved in a signal transduction pathway that is activated by changes in the osmolarity of the extracellular environment. Controls osmotic regulation of transcription via the stress response element (STRE) in promoters of target genes. Upon osmotic shock, associates with the SKO1-SSN6-TUP1 complex, phosphorylates SKO1, and converts it into an activator that subsequently recruits Swi/Snf and SAGA complexes. Activates the SMP1 transcription factor and the RCK2 kinase, both also involved in the regulation of the expression of a subset of osmotic stress-related genes. Phosphorylation of HSL1 by HOG1 leads to a G2 arrest essential for cell survival at high osmolarity. Also mediates cell-cycle arrest in G1 phase by the dual targeting of SIC1. Phosphorylates methyltransferase DOT1 at least on 'Ser-565' and 'Thr-576'. Regulates MFA2 ARE-mediated translation in response to carbon source. Targets RPD3 histone deacetylase to osmoresponsive promoters to induce gene expression on stress. Required for the Golgi apparatus localization of MNN1. Plays an essential role in maintaining water homeostasis, arsenite detoxification, copper-resistance, cold-resistance, hydrogen peroxide response, adaptation to citric acid stress, and repression of the mating pathway activity. Functions as an arsenic sensor and effector via direct binding to arsenic and subsequent phosphorylation of the ARR1 transcription factor. This Saccharomyces cerevisiae (strain ATCC 204508 / S288c) (Baker's yeast) protein is Mitogen-activated protein kinase HOG1 (HOG1).